The following is a 513-amino-acid chain: ATP synthase subunit alpha (513 aa).

169–176 (GDRQTGKT) is a binding site for ATP.

This sequence belongs to the ATPase alpha/beta chains family. As to quaternary structure, F-type ATPases have 2 components, CF(1) - the catalytic core - and CF(0) - the membrane proton channel. CF(1) has five subunits: alpha(3), beta(3), gamma(1), delta(1), epsilon(1). CF(0) has three main subunits: a(1), b(2) and c(9-12). The alpha and beta chains form an alternating ring which encloses part of the gamma chain. CF(1) is attached to CF(0) by a central stalk formed by the gamma and epsilon chains, while a peripheral stalk is formed by the delta and b chains.

The protein resides in the cell inner membrane. The enzyme catalyses ATP + H2O + 4 H(+)(in) = ADP + phosphate + 5 H(+)(out). In terms of biological role, produces ATP from ADP in the presence of a proton gradient across the membrane. The alpha chain is a regulatory subunit. This Halorhodospira halophila (strain DSM 244 / SL1) (Ectothiorhodospira halophila (strain DSM 244 / SL1)) protein is ATP synthase subunit alpha.